Reading from the N-terminus, the 689-residue chain is Glycine--tRNA ligase beta subunit (689 aa).

Belongs to the class-II aminoacyl-tRNA synthetase family. Tetramer of two alpha and two beta subunits.

Its subcellular location is the cytoplasm. It catalyses the reaction tRNA(Gly) + glycine + ATP = glycyl-tRNA(Gly) + AMP + diphosphate. The protein is Glycine--tRNA ligase beta subunit of Salmonella dublin (strain CT_02021853).